The sequence spans 128 residues: Large ribosomal subunit protein bL12c (128 aa).

It belongs to the bacterial ribosomal protein bL12 family. Homodimer. Part of the ribosomal stalk of the 50S ribosomal subunit. Forms a multimeric L10(L12)X complex, where L10 forms an elongated spine to which 2 to 4 L12 dimers bind in a sequential fashion. Binds GTP-bound translation factors.

Its subcellular location is the plastid. It localises to the chloroplast. Functionally, forms part of the ribosomal stalk which helps the ribosome interact with GTP-bound translation factors. Is thus essential for accurate translation. The polypeptide is Large ribosomal subunit protein bL12c (Phaeodactylum tricornutum (strain CCAP 1055/1)).